Here is an 887-residue protein sequence, read N- to C-terminus: Probable LRR receptor-like serine/threonine-protein kinase At5g59680 (887 aa).

The N-terminal stretch at 1–23 (MERSLELLLLLIRTLAIIHISQA) is a signal peptide. The Extracellular segment spans residues 25-510 (SQQGFISLDC…TKSGKSFPVT (486 aa)). 12 N-linked (GlcNAc...) asparagine glycosylation sites follow: asparagine 143, asparagine 230, asparagine 256, asparagine 289, asparagine 338, asparagine 363, asparagine 400, asparagine 416, asparagine 432, asparagine 445, asparagine 464, and asparagine 471. 3 LRR repeats span residues 411-434 (RITT…QNLT), 435-457 (TLEK…LSNM), and 459-481 (SLLV…LQRK). The chain crosses the membrane as a helical span at residues 511–531 (IVASVGSAAILIVVLVLVLFL). At 532–887 (RKKKPSAVEV…FDAEMIPRAR (356 aa)) the chain is on the cytoplasmic side. Residue threonine 571 is modified to Phosphothreonine. Residues 580-853 (NNFGRVVGEG…HVVIELKECL (274 aa)) enclose the Protein kinase domain. Residues 586–594 (VGEGGFGVV) and lysine 608 contribute to the ATP site. Tyrosine 653 bears the Phosphotyrosine mark. Aspartate 705 acts as the Proton acceptor in catalysis. Serine 739 bears the Phosphoserine mark. 2 positions are modified to phosphothreonine: threonine 740 and threonine 745. At tyrosine 753 the chain carries Phosphotyrosine.

It belongs to the protein kinase superfamily. Ser/Thr protein kinase family.

The protein resides in the membrane. It catalyses the reaction L-seryl-[protein] + ATP = O-phospho-L-seryl-[protein] + ADP + H(+). The catalysed reaction is L-threonyl-[protein] + ATP = O-phospho-L-threonyl-[protein] + ADP + H(+). In Arabidopsis thaliana (Mouse-ear cress), this protein is Probable LRR receptor-like serine/threonine-protein kinase At5g59680.